The primary structure comprises 498 residues: Acetyl-coenzyme A carboxylase carboxyl transferase subunit beta, chloroplastic (498 aa).

In terms of domain architecture, CoA carboxyltransferase N-terminal spans 228-498 (LWVQCEICYG…LNHNLSRTLT (271 aa)). The Zn(2+) site is built by C232, C235, C251, and C254. The segment at 232-254 (CEICYGLNYKKFFKSKMNICEQC) adopts a C4-type zinc-finger fold.

This sequence belongs to the AccD/PCCB family. As to quaternary structure, acetyl-CoA carboxylase is a heterohexamer composed of biotin carboxyl carrier protein, biotin carboxylase and 2 subunits each of ACCase subunit alpha and ACCase plastid-coded subunit beta (accD). The cofactor is Zn(2+).

It is found in the plastid. The protein localises to the chloroplast stroma. It catalyses the reaction N(6)-carboxybiotinyl-L-lysyl-[protein] + acetyl-CoA = N(6)-biotinyl-L-lysyl-[protein] + malonyl-CoA. Its pathway is lipid metabolism; malonyl-CoA biosynthesis; malonyl-CoA from acetyl-CoA: step 1/1. Component of the acetyl coenzyme A carboxylase (ACC) complex. Biotin carboxylase (BC) catalyzes the carboxylation of biotin on its carrier protein (BCCP) and then the CO(2) group is transferred by the transcarboxylase to acetyl-CoA to form malonyl-CoA. The polypeptide is Acetyl-coenzyme A carboxylase carboxyl transferase subunit beta, chloroplastic (Populus alba (White poplar)).